We begin with the raw amino-acid sequence, 495 residues long: Cornulin (495 aa).

An EF-hand domain is found at 49-84 (HDPATVDEVLRLLDEDHTGTVEFKEFLVLVFKVAQA). Ca(2+)-binding residues include Asp-62, Asp-64, Thr-66, Thr-68, and Glu-73. 2 disordered regions span residues 96–439 (ACGS…TVVG) and 460–481 (LHTS…KRGI). The span at 99-110 (SQESGSLHSGAS) shows a compositional bias: polar residues. The span at 137–151 (HRQSQQGSRGQNRPG) shows a compositional bias: low complexity. Over residues 152–194 (VQTQGQATGSAWVSSYDRQAESQSQERISPQIQLSGQTEQTQK) the composition is skewed to polar residues. Residues 196–222 (GEGKRNQTTEMRPERQPQTREQDRAHQ) are compositionally biased toward basic and acidic residues. Residues 226-242 (TVTGSGTQTQAGATQTV) show a composition bias toward low complexity. Composition is skewed to polar residues over residues 243 to 282 (EQDS…SQAV) and 290 to 303 (QAGT…QTVE). A compositionally biased stretch (low complexity) spans 307 to 324 (SHQTGSTSTQTQESTNGQ). The segment covering 334–355 (GRSQTSQAVTGGHTQIQAGSHT) has biased composition (polar residues). Positions 374–385 (QGQTQTQPGSGQ) are enriched in low complexity. 2 stretches are compositionally biased toward polar residues: residues 403-420 (QAQT…WSST) and 460-473 (LHTS…QDAA).

It belongs to the S100-fused protein family. Homodimer. As to expression, expressed in the basal skin layer (at protein level). Squamous epithelia cell-specific. Expressed in the esophagus (periphery of the cells of the granular and the upper spinous layers), foreskin (granular and lower cornified cells), scalp skin (granular layer), inner root sheath of the hair follicle and in primary keratinocytes (at protein level). Expressed in the squamous epithelium of the cervix, esophagus, foreskin and larynx. Expressed in the fetal bladder and scalp skin. Expressed at very low levels in the lung, kidney, uterus, skeletal muscle, heart and fetal brain. Undetectable or barely detectable in esophageal and oral squamous cell carcinoma compared with the matched adjacent normal esophageal mucosa. Undetectable or barely detectable in larynx and esophagus from patients with pH-documented laryngopharyngeal reflux (LPR).

It is found in the cytoplasm. Promotes cell proliferation, G1/S cell cycle progression and induces expression of the cell cycle regulator CCND1. Regulates proliferation induced by pro-inflammatory cytokine response via activation of NFKB1 and PI3K/AKT signaling pathways. The polypeptide is Cornulin (CRNN) (Homo sapiens (Human)).